The chain runs to 262 residues: Encapsulin nanocompartment protein Rv1762c (262 aa).

Belongs to the UPF0145 family.

The protein localises to the encapsulin nanocompartment. Cargo protein of a type 1 encapsulin nanocompartment possibly involved in protection against oxidative stress. The protein is Encapsulin nanocompartment protein Rv1762c of Mycobacterium tuberculosis (strain ATCC 25618 / H37Rv).